We begin with the raw amino-acid sequence, 496 residues long: RNA-binding motif protein, Y chromosome, family 1 member F/J (496 aa).

The RRM domain occupies 8–85 (GKLFIGGLNR…KAIKVEQAKK (78 aa)). Disordered regions lie at residues 81-345 (EQAK…YAPP) and 452-496 (KDQR…SSRY). 2 stretches are compositionally biased toward low complexity: residues 97–114 (PASS…SARG) and 149–159 (PVKRGPSSRSG). The span at 175 to 184 (NSWMGSQGPM) shows a compositional bias: polar residues. 6 stretches are compositionally biased toward basic and acidic residues: residues 204–214 (RNDRMSTRHDG), 242–253 (DNGHSNRDEHSS), 276–289 (AYRD…DESY), 313–326 (GYRD…HESY), 335–345 (SSRETRDYAPP), and 484–496 (GESR…SSRY).

Interacts with splicing factor proteins SFRS3/SRP20, TRA2B/SFRS10, KHDRBS1/SAM68 and KHDRBS3. In terms of tissue distribution, testis-specific.

The protein resides in the nucleus. Its function is as follows. RNA-binding protein which may be involved in spermatogenesis. Required for sperm development, possibly by participating in pre-mRNA splicing in the testis. This is RNA-binding motif protein, Y chromosome, family 1 member F/J (RBMY1F) from Homo sapiens (Human).